The chain runs to 406 residues: Imidazolonepropionase (406 aa).

Fe(3+) contacts are provided by His72 and His74. Zn(2+) is bound by residues His72 and His74. 3 residues coordinate 4-imidazolone-5-propanoate: Arg81, Tyr144, and His177. Position 144 (Tyr144) interacts with N-formimidoyl-L-glutamate. Position 242 (His242) interacts with Fe(3+). His242 is a binding site for Zn(2+). Residue Gln245 participates in 4-imidazolone-5-propanoate binding. Asp317 contacts Fe(3+). Asp317 is a Zn(2+) binding site. N-formimidoyl-L-glutamate-binding residues include Asn319 and Gly321. Thr322 provides a ligand contact to 4-imidazolone-5-propanoate.

It belongs to the metallo-dependent hydrolases superfamily. HutI family. It depends on Zn(2+) as a cofactor. Fe(3+) serves as cofactor.

The protein localises to the cytoplasm. It catalyses the reaction 4-imidazolone-5-propanoate + H2O = N-formimidoyl-L-glutamate. The protein operates within amino-acid degradation; L-histidine degradation into L-glutamate; N-formimidoyl-L-glutamate from L-histidine: step 3/3. In terms of biological role, catalyzes the hydrolytic cleavage of the carbon-nitrogen bond in imidazolone-5-propanoate to yield N-formimidoyl-L-glutamate. It is the third step in the universal histidine degradation pathway. The protein is Imidazolonepropionase of Yersinia pseudotuberculosis serotype O:1b (strain IP 31758).